We begin with the raw amino-acid sequence, 972 residues long: Hemoglobin and hemoglobin-haptoglobin-binding protein (972 aa).

The N-terminal stretch at 1 to 22 (MKANKLSAITLCILGYAHTVYA) is a signal peptide. The TonB box signature appears at 32-39 (ETIVVSSE). Residues 38–167 (SEDDSVHNKN…LGGTVSFESK (130 aa)) enclose the TBDR plug domain. The TBDR beta-barrel domain maps to 175-972 (DKNYHFGYKT…NFRVNAEITF (798 aa)). The TonB C-terminal box motif lies at 955-972 (KRFNAPGRNFRVNAEITF).

Belongs to the TonB-dependent receptor family. Hemoglobin/haptoglobin binding protein subfamily.

It localises to the cell outer membrane. Acts as a receptor for hemoglobin or the hemoglobin/haptoglobin complex of the host and is required for heme uptake. May be involved in virulence. The polypeptide is Hemoglobin and hemoglobin-haptoglobin-binding protein (Haemophilus ducreyi (strain 35000HP / ATCC 700724)).